The primary structure comprises 1243 residues: Plasma membrane calcium-transporting ATPase 2 (1243 aa).

The span at 1-13 shows a compositional bias: polar residues; that stretch reads MGDMTNSDFYSKN. Residues 1–24 form a disordered region; the sequence is MGDMTNSDFYSKNQRNESSHGGEF. Over 1-94 the chain is Cytoplasmic; sequence MGDMTNSDFY…NFIPPKKPKT (94 aa). Ser18 and Ser27 each carry phosphoserine. A helical transmembrane segment spans residues 95–115; that stretch reads FLQLVWEALQDVTLIILEIAA. Over 116-152 the chain is Extracellular; it reads IISLGLSFYHPPGESNEGCATAQGGAEDEGEAEAGWI. Residues 153 to 173 form a helical membrane-spanning segment; sequence EGAAILLSVICVVLVTAFNDW. The Cytoplasmic portion of the chain corresponds to 174-390; the sequence is SKEKQFRGLQ…KEKSVLQGKL (217 aa). A compositionally biased stretch (basic and acidic residues) spans 296–308; sequence EEKKDKKGVKKGD. The segment at 296–382 is disordered; it reads EEKKDKKGVK…KKKANMHKKE (87 aa). Composition is skewed to low complexity over residues 313 to 330 and 337 to 356; these read PAADGAAPANAAGSANAS and QDGSADSSQSKAKQQDGAAA. Residues 391-410 form a helical membrane-spanning segment; sequence TKLAVQIGKAGLVMSAITVI. Residues 411 to 443 are Extracellular-facing; the sequence is ILVLYFTVDTFVVNKKPWLTECTPVYVQYFVKF. A helical membrane pass occupies residues 444-461; sequence FIIGVTVLVVAVPEGLPL. Topologically, residues 462 to 875 are cytoplasmic; sequence AVTISLAYSV…MWGRNVYDSI (414 aa). Asp499 (4-aspartylphosphate intermediate) is an active-site residue. Residues Asp820 and Asp824 each coordinate Mg(2+). Residues 876 to 895 form a helical membrane-spanning segment; the sequence is SKFLQFQLTVNVVAVIVAFT. The Extracellular segment spans residues 896-905; that stretch reads GACITQDSPL. The chain crosses the membrane as a helical span at residues 906-926; it reads KAVQMLWVNLIMDTFASLALA. The Cytoplasmic segment spans residues 927-946; that stretch reads TEPPTETLLLRKPYGRNKPL. A helical transmembrane segment spans residues 947 to 969; the sequence is ISRTMMKNILGHAVYQLTLIFTL. Over 970-987 the chain is Extracellular; that stretch reads LFVGEKMFQIDSGRNAPL. The helical transmembrane segment at 988–1009 threads the bilayer; that stretch reads HSPPSEHYTIIFNTFVMMQLFN. Topologically, residues 1010–1028 are cytoplasmic; it reads EINARKIHGERNVFDGIFR. A helical transmembrane segment spans residues 1029–1050; the sequence is NPIFCTIVLGTFAIQIVIVQFG. Over 1051 to 1060 the chain is Extracellular; it reads GKPFSCSPLQ. The chain crosses the membrane as a helical span at residues 1061–1082; that stretch reads LDQWMWCIFIGLGELVWGQVIA. The Cytoplasmic segment spans residues 1083–1243; it reads TIPTSRLKFL…SPIHSLETSL (161 aa). A phosphoserine mark is found at Glu1107, Ile1116, Asp1117, Arg1121, Trp1130, Phe1131, and Gln1138. The calmodulin-binding subdomain A stretch occupies residues 1123 to 1140; sequence LRRGQILWFRGLNRIQTQ. Thr1139 is subject to Phosphothreonine; by PKC. Residues 1141 to 1150 are calmodulin-binding subdomain B; sequence IRVVKAFRSS. Phosphoserine is present on residues Val1144, Phe1147, Arg1148, Tyr1152, Arg1161, Thr1162, Ile1175, and Ser1178. Phosphothreonine is present on Thr1188. The interval 1194 to 1243 is disordered; it reads AALKQNSSPPSSLNKNNSAIDSGINLTTDTSKSATSSSPGSPIHSLETSL. Composition is skewed to low complexity over residues 1196 to 1211 and 1220 to 1234; these read LKQNSSPPSSLNKNNS and TTDTSKSATSSSPGS. At Ser1201 the chain carries Phosphoserine; by PKA. Ser1211 bears the Phosphoserine mark.

This sequence belongs to the cation transport ATPase (P-type) (TC 3.A.3) family. Type IIB subfamily. In terms of assembly, interacts with PDZD11. As to expression, isoforms containing segment B are found in brain, uterus, liver and kidney and in low levels in other tissues. Isoforms containing segment W are found in kidney, uterus, and pancreas. Isoforms containing segment Y are found in pancreas and in low levels in brain and heart. Isoforms containing segment Z are found in brain and heart and isoforms containing segment X are found in low levels in brain. Isoforms containing segment A are found in low levels in heart and small intestine while isoforms containing segment C are found in testis and in low levels in other tissues.

It is found in the cell membrane. The protein localises to the synapse. The protein resides in the apical cell membrane. It localises to the basolateral cell membrane. It catalyses the reaction Ca(2+)(in) + ATP + H2O = Ca(2+)(out) + ADP + phosphate + H(+). Functionally, ATP-driven Ca(2+) ion pump involved in the maintenance of basal intracellular Ca(2+) levels in specialized cells of cerebellar circuit and vestibular and cochlear systems. Uses ATP as an energy source to transport cytosolic Ca(2+) ions across the plasma membrane to the extracellular compartment. Has fast activation and Ca(2+) clearance rate suited to control fast neuronal Ca(2+) dynamics. At parallel fiber to Purkinje neuron synapse, mediates presynaptic Ca(2+) efflux in response to climbing fiber-induced Ca(2+) rise. Provides for fast return of Ca(2+) concentrations back to their resting levels, ultimately contributing to long-term depression induction and motor learning. Plays an essential role in hearing and balance. In cochlear hair cells, shuttles Ca(2+) ions from stereocilia to the endolymph and dissipates Ca(2+) transients generated by the opening of the mechanoelectrical transduction channels. Regulates Ca(2+) levels in the vestibular system, where it contributes to the formation of otoconia. In non-excitable cells, regulates Ca(2+) signaling through spatial control of Ca(2+) ions extrusion and dissipation of Ca(2+) transients generated by store-operated channels. In lactating mammary gland, allows for the high content of Ca(2+) ions in the milk. In Rattus norvegicus (Rat), this protein is Plasma membrane calcium-transporting ATPase 2 (Atp2b2).